The chain runs to 410 residues: Divergent protein kinase domain 1A (410 aa).

The Cytoplasmic segment spans residues 1–5; the sequence is MARLS. Residues 6-26 traverse the membrane as a helical segment; the sequence is YVRIKYLFFSWLAVFIGSWVI. The Lumenal portion of the chain corresponds to 27–410; that stretch reads YVRYNSYTEL…WKKISHTNDS (384 aa).

Belongs to the DIPK family. In terms of processing, among the many cysteines in the lumenal domain, most are probably involved in disulfide bonds.

The protein resides in the endoplasmic reticulum membrane. The protein is Divergent protein kinase domain 1A (dipk1a) of Xenopus laevis (African clawed frog).